Consider the following 438-residue polypeptide: MKDKLHWLAMHGVIRGIAAIGIRRGDLQARLIADPAVATDPVPFYDEVRSHGALVRNRANYLTVDHRLAHDLLRSDDFRVVSFGENLPPPLRWLERRTRGDQLHPLREPSLLAVEPPDHTRYRKTVSAVFTSRAVSALRDLVEQTAINLLDRFAEQPGIVDVVGRYCSQLPIVVISEILGVPEHDRPRVLEFGELAAPSLDIGIPWRQYLRVQQGIRGFDCWLEGHLQQLRHAPGDDLMSQLIQIAESGDNETQLDETELRAIAGLVLVAGFETTVNLLGNGIRMLLDTPEHLATLRQHPELWPNTVEEILRLDSPVQLTARVACRDVEVAGVRIKRGEVVVIYLAAANRDPAVFPDPHRFDIERPNAGRHLAFSTGRHFCLGAALARAEGEVGLRTFFDRFPDVRAAGAGSRRDTRVLRGWSTLPVTLGPARSMVSP.

Cys381 is a heme binding site.

It belongs to the cytochrome P450 family. The cofactor is heme.

In Mycobacterium bovis (strain ATCC BAA-935 / AF2122/97), this protein is Putative cytochrome P450 140 (cyp140).